We begin with the raw amino-acid sequence, 207 residues long: Antitermination protein Q (207 aa).

Residues 1–28 (MRLESVAKFHSPKSPMMSDSPRATASDS) form a disordered region. Positions 118, 121, 144, and 147 each coordinate Zn(2+). A zinc finger lies at 118-147 (CRNCHGTGRAVDIAKTEQWGRVVEKECGRC). The DNA-binding element occupies 171–192 (LTQPTWSRTVKPLYDALVVQCH).

It belongs to the phage antitermination Q type 2 family. As to quaternary structure, interacts with host RPOB (via flap domain); this interaction renders host RNAP resistant to transcription pausing and allows it to read through termination signals. Interacts with host RNA polymerase sigma factor RPOD (via domain-4). Interacts with host NusA (via N-terminus and AR2 domain); this interaction releases the autoinhibition of NusA.

Its function is as follows. Mediates the switch from middle to viral late gene expression by associating with host RNA polymerase (RNAP) so that the latter can read without pausing and through transcription terminators preceding late genes. Competes with host factor sigma 70 for binding to RPOB, the beta-subunit of host RNAP. To join the elongation complex, binds a specific DNA Q-binding element (QBE) and interacts with RNAP that is paused during early elongation. Participates in the lysis-lysogeny decision by activating the expression of the late lytic genes. The sequence is that of Antitermination protein Q (23) from Salmonella typhimurium.